The primary structure comprises 99 residues: Aspartyl/glutamyl-tRNA(Asn/Gln) amidotransferase subunit C (99 aa).

This sequence belongs to the GatC family. Heterotrimer of A, B and C subunits.

It catalyses the reaction L-glutamyl-tRNA(Gln) + L-glutamine + ATP + H2O = L-glutaminyl-tRNA(Gln) + L-glutamate + ADP + phosphate + H(+). It carries out the reaction L-aspartyl-tRNA(Asn) + L-glutamine + ATP + H2O = L-asparaginyl-tRNA(Asn) + L-glutamate + ADP + phosphate + 2 H(+). Its function is as follows. Allows the formation of correctly charged Asn-tRNA(Asn) or Gln-tRNA(Gln) through the transamidation of misacylated Asp-tRNA(Asn) or Glu-tRNA(Gln) in organisms which lack either or both of asparaginyl-tRNA or glutaminyl-tRNA synthetases. The reaction takes place in the presence of glutamine and ATP through an activated phospho-Asp-tRNA(Asn) or phospho-Glu-tRNA(Gln). The polypeptide is Aspartyl/glutamyl-tRNA(Asn/Gln) amidotransferase subunit C (Polaromonas sp. (strain JS666 / ATCC BAA-500)).